The following is a 305-amino-acid chain: Putative lipid kinase USA300HOU_0749 (305 aa).

The region spanning 3–139 (NKYTHGVLFY…YDVIKINNQY (137 aa)) is the DAGKc domain. ATP contacts are provided by residues Ser44, 74-80 (GDGTVNE), and Thr101. The Mg(2+) site is built by Ser220, Asp223, and Glu225. Glu281 serves as the catalytic Proton acceptor.

Belongs to the diacylglycerol/lipid kinase family. Mg(2+) serves as cofactor.

Functionally, may catalyze the ATP-dependent phosphorylation of lipids other than diacylglycerol (DAG). The sequence is that of Putative lipid kinase USA300HOU_0749 from Staphylococcus aureus (strain USA300 / TCH1516).